The following is a 275-amino-acid chain: Small ribosomal subunit protein uS2 (275 aa).

The tract at residues 232–256 is disordered; that stretch reads ARATDGKPEPEPVPGQELGADEPLA.

Belongs to the universal ribosomal protein uS2 family.

The polypeptide is Small ribosomal subunit protein uS2 (Acidothermus cellulolyticus (strain ATCC 43068 / DSM 8971 / 11B)).